The chain runs to 2084 residues: MAP kinase-activating death domain protein (2084 aa).

A uDENN domain is found at 25–352; that stretch reads TPPMPKGLQG…VPVPGSTRVE (328 aa). The interval 117 to 253 is disordered; sequence PSSAAGSAGA…SPRASRKRTK (137 aa). The segment covering 118 to 131 has biased composition (low complexity); sequence SSAAGSAGAGNDRP. The span at 132 to 152 shows a compositional bias: gly residues; the sequence is GNGGPGGHGGGAGGGAGGGGR. Positions 160-173 are enriched in basic and acidic residues; that stretch reads FRRESWRKSMERSS. A compositionally biased stretch (low complexity) spans 174 to 183; that stretch reads DSAFSSDYRS. A compositionally biased stretch (basic and acidic residues) spans 189–204; it reads DSDRELTSRRDSDQQR. Positions 205-215 are enriched in basic residues; sequence LHSHHSHHQPH. Residues 234-245 show a composition bias toward polar residues; sequence DSESGGSHSPSP. Residues 373–514 enclose the cDENN domain; it reads RFSLVDFPLH…EGTILKNHLK (142 aa). One can recognise a dDENN domain in the interval 516-678; that stretch reads ALTSMTATNT…EWSLTPTNVA (163 aa). Disordered stretches follow at residues 557–588, 730–749, 811–863, 891–963, 1058–1092, 1115–1188, and 1305–1382; these read TPPHSAQASQRNSMSAQGTISSRQPSPMNSPA, QPTDESGSDSEGADSSSSSY, VASK…TVGS, QESD…SQSS, HSAGGAGPPPKSPGSQLATHKQVQQSGGQGGGNNF, FGKK…AENQ, and SSSL…GQST. The span at 558–588 shows a compositional bias: polar residues; it reads PPHSAQASQRNSMSAQGTISSRQPSPMNSPA. Residues 824–839 are compositionally biased toward low complexity; that stretch reads SPVSSSSSRSDLSSPS. Basic and acidic residues predominate over residues 913 to 925; the sequence is HPSDSESRPEKKI. Residues 946 to 963 show a composition bias toward low complexity; the sequence is GSSGSSSSSPGRQSSQSS. Over residues 1121-1131 the composition is skewed to low complexity; it reads QKQVPVQQKQP. Basic and acidic residues predominate over residues 1168 to 1183; sequence TQEELTRQQNQERSHS. Residues 1305–1315 are compositionally biased toward low complexity; it reads SSSLLSSHAAS. Composition is skewed to polar residues over residues 1324–1353 and 1370–1382; these read RSPSSPNGSHSALGSEWASPQESRKSSTQL and RLSSADSQDGQST. The region spanning 1490–1565 is the Death domain; that stretch reads GMDQGPIEMM…GLVYSQEVHN (76 aa). Over residues 1794–1842 the composition is skewed to low complexity; the sequence is DIHAQQKQKHQQQQQHQQPQQQQQPHQTTTQQNQPTAVASAVPTTTAPA. 2 disordered regions span residues 1794–1865 and 1896–2084; these read DIHA…RHTV and VPVP…HRKH. The segment covering 1845–1858 has biased composition (polar residues); it reads VNPNRMTAKSQAGS. Residues 1896–1907 show a composition bias toward pro residues; the sequence is VPVPPTPAPPTS. Residues 1921-1932 are compositionally biased toward polar residues; it reads SQPSTESLASIS. Pro residues-rich tracts occupy residues 1933–1953 and 1983–1993; these read SPPPKLRTPMSAPPGPPPAIP and QYTPQPPPPFV. 2 stretches are compositionally biased toward low complexity: residues 2001–2029 and 2059–2077; these read LARASTLSSSTSPSMSSSSASNHPGHSQS and ISGSSSGSGSASGSIASAS.

The protein belongs to the MADD family.

It is found in the cell membrane. It localises to the cytoplasm. Its function is as follows. Guanyl-nucleotide exchange factor that regulates small GTPases. Converts GDP-bound inactive form of Rab3 to the GTP-bound active forms. This chain is MAP kinase-activating death domain protein, found in Drosophila melanogaster (Fruit fly).